A 139-amino-acid polypeptide reads, in one-letter code: ATP synthase epsilon chain (139 aa).

Belongs to the ATPase epsilon chain family. As to quaternary structure, F-type ATPases have 2 components, CF(1) - the catalytic core - and CF(0) - the membrane proton channel. CF(1) has five subunits: alpha(3), beta(3), gamma(1), delta(1), epsilon(1). CF(0) has three main subunits: a, b and c.

It is found in the cell inner membrane. Its function is as follows. Produces ATP from ADP in the presence of a proton gradient across the membrane. The chain is ATP synthase epsilon chain from Pseudomonas putida (strain W619).